We begin with the raw amino-acid sequence, 231 residues long: Somatolactin-2 (231 aa).

An N-terminal signal peptide occupies residues 1-24 (MRMMRAIKQGQWAILLWPYLLTTS). 3 disulfide bridges follow: cysteine 29–cysteine 39, cysteine 89–cysteine 205, and cysteine 222–cysteine 230. Asparagine 145 is a glycosylation site (N-linked (GlcNAc...) asparagine).

The protein belongs to the somatotropin/prolactin family. As to expression, pituitary gland.

The protein resides in the secreted. The protein is Somatolactin-2 of Sparus aurata (Gilthead sea bream).